A 560-amino-acid polypeptide reads, in one-letter code: Probable methionine--tRNA ligase, cytoplasmic (560 aa).

The 'HIGH' region motif lies at 16 to 26 (PYVNNQPHLGN). The 'KMSKS' region motif lies at 347 to 351 (KFSKS). Lysine 350 contributes to the ATP binding site.

The protein belongs to the class-I aminoacyl-tRNA synthetase family.

The protein resides in the cytoplasm. The catalysed reaction is tRNA(Met) + L-methionine + ATP = L-methionyl-tRNA(Met) + AMP + diphosphate. This Vairimorpha ceranae (strain BRL01) (Microsporidian parasite) protein is Probable methionine--tRNA ligase, cytoplasmic.